The following is an 895-amino-acid chain: Putative endoplasmic reticulum metallopeptidase 1-A (895 aa).

The segment at Met1–Arg30 is disordered. The Cytoplasmic segment spans residues Met1–Ser34. Residues Glu10–Arg30 show a composition bias toward basic and acidic residues. The helical transmembrane segment at Ile35 to Val55 threads the bilayer. Residues Ala56–Ser383 lie on the Lumenal side of the membrane. Zn(2+)-binding residues include His174 and Asp186. The active-site Proton acceptor is the Glu220. Zn(2+) contacts are provided by Glu221, Glu247, and His323. The chain crosses the membrane as a helical span at residues Val384–Leu404. Residues Arg405–His423 lie on the Cytoplasmic side of the membrane. The helical transmembrane segment at Val424 to Met444 threads the bilayer. The Lumenal segment spans residues Asp445 to Lys452. A helical membrane pass occupies residues Met453–His473. Over Ser474–Thr492 the chain is Cytoplasmic. Residues Ile493 to Phe513 form a helical membrane-spanning segment. The Lumenal portion of the chain corresponds to Tyr514–Asn517. Residues Asn518 to Ile538 form a helical membrane-spanning segment. Over Arg539 to Arg544 the chain is Cytoplasmic. A helical membrane pass occupies residues Val545 to Ile565. The Lumenal segment spans residues Ser566 to Glu586. Residues Phe587–Leu607 form a helical membrane-spanning segment. Over Phe608–Arg613 the chain is Cytoplasmic. A helical membrane pass occupies residues Met614–Thr634. At Thr635 to Phe895 the chain is on the lumenal side. 3 N-linked (GlcNAc...) asparagine glycosylation sites follow: Asn659, Asn702, and Asn758.

Belongs to the peptidase M28 family. Zn(2+) serves as cofactor.

The protein localises to the endoplasmic reticulum membrane. This chain is Putative endoplasmic reticulum metallopeptidase 1-A, found in Caenorhabditis elegans.